The primary structure comprises 786 residues: Endonuclease MutS2 (786 aa).

335–342 (GPNTGGKT) is a binding site for ATP. In terms of domain architecture, Smr spans 711-786 (LDLRGERFEN…GLGVTVVELK (76 aa)).

The protein belongs to the DNA mismatch repair MutS family. MutS2 subfamily. As to quaternary structure, homodimer. Binds to stalled ribosomes, contacting rRNA.

In terms of biological role, endonuclease that is involved in the suppression of homologous recombination and thus may have a key role in the control of bacterial genetic diversity. Its function is as follows. Acts as a ribosome collision sensor, splitting the ribosome into its 2 subunits. Detects stalled/collided 70S ribosomes which it binds and splits by an ATP-hydrolysis driven conformational change. Acts upstream of the ribosome quality control system (RQC), a ribosome-associated complex that mediates the extraction of incompletely synthesized nascent chains from stalled ribosomes and their subsequent degradation. Probably generates substrates for RQC. In Bacillus cereus (strain B4264), this protein is Endonuclease MutS2.